We begin with the raw amino-acid sequence, 405 residues long: Argininosuccinate synthase (405 aa).

ATP is bound by residues 10 to 18 (AYSGGLDTS) and Ala37. The L-citrulline site is built by Tyr88 and Ser93. Gly118 is a binding site for ATP. Residues Thr120, Asn124, and Asp125 each coordinate L-aspartate. L-citrulline is bound at residue Asn124. 5 residues coordinate L-citrulline: Arg128, Ser179, Ser188, Glu264, and Tyr276.

Belongs to the argininosuccinate synthase family. Type 1 subfamily. As to quaternary structure, homotetramer.

Its subcellular location is the cytoplasm. It catalyses the reaction L-citrulline + L-aspartate + ATP = 2-(N(omega)-L-arginino)succinate + AMP + diphosphate + H(+). The protein operates within amino-acid biosynthesis; L-arginine biosynthesis; L-arginine from L-ornithine and carbamoyl phosphate: step 2/3. The chain is Argininosuccinate synthase from Pseudomonas fluorescens (strain SBW25).